The sequence spans 163 residues: 3-isopropylmalate dehydratase small subunit (163 aa).

It belongs to the LeuD family. LeuD type 2 subfamily. As to quaternary structure, heterodimer of LeuC and LeuD.

It carries out the reaction (2R,3S)-3-isopropylmalate = (2S)-2-isopropylmalate. Its pathway is amino-acid biosynthesis; L-leucine biosynthesis; L-leucine from 3-methyl-2-oxobutanoate: step 2/4. Catalyzes the isomerization between 2-isopropylmalate and 3-isopropylmalate, via the formation of 2-isopropylmaleate. This is 3-isopropylmalate dehydratase small subunit from Endomicrobium trichonymphae.